A 368-amino-acid chain; its full sequence is uncharacterized protein (368 aa).

This sequence belongs to the Gfo/Idh/MocA family.

This is an uncharacterized protein from Schizosaccharomyces pombe (strain 972 / ATCC 24843) (Fission yeast).